The following is a 743-amino-acid chain: Inhibitor of nuclear factor kappa-B kinase subunit alpha (743 aa).

The region spanning 15 to 300 (WDMKDRLGTG…IDCGRPRCFM (286 aa)) is the Protein kinase domain. ATP-binding positions include 21-29 (LGTGGFGNV) and Lys44. The active-site Proton acceptor is Asp144. The tract at residues 453-474 (LLRFNTNLTKMKNTMVSASQQL) is leucine-zipper. The segment at 736–741 (MDFSWL) is NEMO-binding.

It belongs to the protein kinase superfamily. Ser/Thr protein kinase family. I-kappa-B kinase subfamily.

Its subcellular location is the cytoplasm. The protein localises to the nucleus. It catalyses the reaction L-seryl-[I-kappa-B protein] + ATP = O-phospho-L-seryl-[I-kappa-B protein] + ADP + H(+). Its activity is regulated as follows. Activated when phosphorylated and inactivated when dephosphorylated. Its function is as follows. Phosphorylates inhibitors of NF-kappa-B thus leading to the dissociation of the inhibitor/NF-kappa-B complex and ultimately the degradation of the inhibitor. Phosphorylates 'Ser-10' of histone H3 at NF-kappa-B-regulated promoters during inflammatory responses triggered by cytokines. This Xenopus laevis (African clawed frog) protein is Inhibitor of nuclear factor kappa-B kinase subunit alpha (chuk).